We begin with the raw amino-acid sequence, 89 residues long: Large ribosomal subunit protein bL27 (89 aa).

Residues 1-23 (MAHKKAGGSSRNGRDSAGKRLGI) form a disordered region.

It belongs to the bacterial ribosomal protein bL27 family.

The protein is Large ribosomal subunit protein bL27 of Rhodopseudomonas palustris (strain BisA53).